The following is a 270-amino-acid chain: Diaminopimelate epimerase (270 aa).

The substrate site is built by Asn-15, Gln-49, and Asn-66. Catalysis depends on Cys-75, which acts as the Proton donor. Residues 76-77 (GN), Asn-155, Asn-187, and 204-205 (ER) contribute to the substrate site. Cys-213 (proton acceptor) is an active-site residue. Residue 214 to 215 (GS) participates in substrate binding.

This sequence belongs to the diaminopimelate epimerase family. In terms of assembly, homodimer.

The protein localises to the cytoplasm. The enzyme catalyses (2S,6S)-2,6-diaminopimelate = meso-2,6-diaminopimelate. It functions in the pathway amino-acid biosynthesis; L-lysine biosynthesis via DAP pathway; DL-2,6-diaminopimelate from LL-2,6-diaminopimelate: step 1/1. Functionally, catalyzes the stereoinversion of LL-2,6-diaminopimelate (L,L-DAP) to meso-diaminopimelate (meso-DAP), a precursor of L-lysine and an essential component of the bacterial peptidoglycan. This is Diaminopimelate epimerase from Rickettsia prowazekii (strain Madrid E).